A 136-amino-acid chain; its full sequence is MLSPKRTRFRKQHRGRMNGKSCRGNHICFGRYALQVLEPAWITARQIEAGRRAMTRYARRGGKIWVRIFPDKPVTIRPTETRMGSGKGSPEYWVAVVKPGRILYEMSGVSETVARAAISIAASKMPIRSQFLRLEI.

Belongs to the universal ribosomal protein uL16 family. As to quaternary structure, part of the 50S ribosomal subunit.

It localises to the plastid. Its subcellular location is the chloroplast. The chain is Large ribosomal subunit protein uL16c from Saccharum hybrid (Sugarcane).